The sequence spans 123 residues: Galanin peptides (123 aa).

Positions 1-19 are cleaved as a signal peptide; sequence MPRGSVLLLASLLLAAALS. Residues 20 to 30 constitute a propeptide that is removed on maturation; sequence ATLGLGSPVKE. Basic and acidic residues predominate over residues 53–66; sequence SFQDKHGLAGKREL. Positions 53-79 are disordered; that stretch reads SFQDKHGLAGKRELEPEDEARPGSFDR. Alanine amide is present on Ala61. Residue Ser116 is modified to Phosphoserine.

Belongs to the galanin family.

The protein localises to the secreted. Functionally, endocrine hormone of the central and peripheral nervous systems that binds and activates the G protein-coupled receptors GALR1, GALR2, and GALR3. This small neuropeptide may regulate diverse physiologic functions including contraction of smooth muscle of the gastrointestinal and genitourinary tract, growth hormone and insulin release and adrenal secretion. The polypeptide is Galanin peptides (GAL) (Bos taurus (Bovine)).